The following is a 571-amino-acid chain: Proline--tRNA ligase (571 aa).

It belongs to the class-II aminoacyl-tRNA synthetase family. ProS type 1 subfamily. In terms of assembly, homodimer.

Its subcellular location is the cytoplasm. The catalysed reaction is tRNA(Pro) + L-proline + ATP = L-prolyl-tRNA(Pro) + AMP + diphosphate. In terms of biological role, catalyzes the attachment of proline to tRNA(Pro) in a two-step reaction: proline is first activated by ATP to form Pro-AMP and then transferred to the acceptor end of tRNA(Pro). As ProRS can inadvertently accommodate and process non-cognate amino acids such as alanine and cysteine, to avoid such errors it has two additional distinct editing activities against alanine. One activity is designated as 'pretransfer' editing and involves the tRNA(Pro)-independent hydrolysis of activated Ala-AMP. The other activity is designated 'posttransfer' editing and involves deacylation of mischarged Ala-tRNA(Pro). The misacylated Cys-tRNA(Pro) is not edited by ProRS. This Shewanella baltica (strain OS185) protein is Proline--tRNA ligase.